The chain runs to 477 residues: Bifunctional protein HldE (477 aa).

The segment at 1 to 318 (MKVTLPEFER…ENAVRGRADT (318 aa)) is ribokinase. An N6-acetyllysine modification is found at Lys179. Residue 195 to 198 (NLSE) participates in ATP binding. The active site involves Asp264. The segment at 344–477 (MTNGVFDILH…IKKIQQDKKG (134 aa)) is cytidylyltransferase.

The protein in the N-terminal section; belongs to the carbohydrate kinase PfkB family. This sequence in the C-terminal section; belongs to the cytidylyltransferase family. As to quaternary structure, homodimer.

The catalysed reaction is D-glycero-beta-D-manno-heptose 7-phosphate + ATP = D-glycero-beta-D-manno-heptose 1,7-bisphosphate + ADP + H(+). The enzyme catalyses D-glycero-beta-D-manno-heptose 1-phosphate + ATP + H(+) = ADP-D-glycero-beta-D-manno-heptose + diphosphate. It participates in nucleotide-sugar biosynthesis; ADP-L-glycero-beta-D-manno-heptose biosynthesis; ADP-L-glycero-beta-D-manno-heptose from D-glycero-beta-D-manno-heptose 7-phosphate: step 1/4. The protein operates within nucleotide-sugar biosynthesis; ADP-L-glycero-beta-D-manno-heptose biosynthesis; ADP-L-glycero-beta-D-manno-heptose from D-glycero-beta-D-manno-heptose 7-phosphate: step 3/4. Its function is as follows. Catalyzes the phosphorylation of D-glycero-D-manno-heptose 7-phosphate at the C-1 position to selectively form D-glycero-beta-D-manno-heptose-1,7-bisphosphate. Functionally, catalyzes the ADP transfer from ATP to D-glycero-beta-D-manno-heptose 1-phosphate, yielding ADP-D-glycero-beta-D-manno-heptose. This is Bifunctional protein HldE from Escherichia coli O17:K52:H18 (strain UMN026 / ExPEC).